The primary structure comprises 3305 residues: Microtubule-actin cross-linking factor 1, isoforms 6/7 (3305 aa).

Disordered regions lie at residues 1–24, 108–140, 152–202, 239–272, 333–381, 941–1007, and 2865–2896; these read MGKP…GEDE, VQKS…MPPN, LSEV…KSVD, AAAS…GFSE, EEWE…VAVS, EPAI…PEWS, and SVEP…MPIL. Over residues 120–129 the composition is skewed to basic and acidic residues; that stretch reads PNAERKDNVN. 2 EF-hand domains span residues 2958–2993 and 2994–3029; these read HKKS…SKFP and TTKL…NKDA. D2971, D2973, D2975, K2977, E2982, D3007, D3009, D3011, Y3013, and E3018 together coordinate Ca(2+). The GAR domain occupies 3034 to 3106; sequence TDADKIEDEV…EFLVKNDPCR (73 aa). The interval 3122-3305 is disordered; sequence PEGASQGMTP…ASPRTPGPKR (184 aa). Residues 3142–3176 show a composition bias toward low complexity; sequence SSRAASPTRSSSSASQSNHSCTSMPSSPATPASGT. Positions 3193 to 3212 are enriched in polar residues; sequence FHSSRTSLAGDTSNSSSPAS. Positions 3227-3241 are enriched in low complexity; it reads SRPGSRAGSRAGSRA. Over residues 3256–3266 the composition is skewed to polar residues; that stretch reads ETQSACSDTSE. The segment covering 3267–3278 has biased composition (low complexity); sequence SSAAGGQGSSRR.

It localises to the cytoplasm. Its subcellular location is the cytoskeleton. The chain is Microtubule-actin cross-linking factor 1, isoforms 6/7 from Mus musculus (Mouse).